The following is a 219-amino-acid chain: Ras-related protein RABA5d (219 aa).

Serine 2 is modified (N-acetylserine). Glycine 19–serine 26 provides a ligand contact to GTP. The short motif at serine 41–phenylalanine 49 is the Effector region element. Residues aspartate 67 to glutamine 71, asparagine 125 to aspartate 128, and serine 155 to alanine 156 contribute to the GTP site. 2 S-geranylgeranyl cysteine lipidation sites follow: cysteine 215 and cysteine 216.

Belongs to the small GTPase superfamily. Rab family.

Its subcellular location is the cell membrane. In terms of biological role, intracellular vesicle trafficking and protein transport. The chain is Ras-related protein RABA5d (RABA5D) from Arabidopsis thaliana (Mouse-ear cress).